We begin with the raw amino-acid sequence, 280 residues long: DegV domain-containing protein M6_Spy1440 (280 aa).

The DegV domain occupies 3-280 (WKIVTDSGCD…DGGLLMGYEI (278 aa)). Residues S63 and S91 each contribute to the hexadecanoate site.

Functionally, may bind long-chain fatty acids, such as palmitate, and may play a role in lipid transport or fatty acid metabolism. This Streptococcus pyogenes serotype M6 (strain ATCC BAA-946 / MGAS10394) protein is DegV domain-containing protein M6_Spy1440.